Consider the following 272-residue polypeptide: Glycerol-3-phosphate acyltransferase (272 aa).

The next 6 membrane-spanning stretches (helical) occupy residues 9-29 (IIIL…GILI), 60-80 (AIVM…CLLI), 99-119 (VIIY…CFYF), 149-169 (ASIS…ICLI), 173-193 (VSLA…IPHL), and 226-246 (LNWW…VLVI).

Belongs to the PlsY family. In terms of assembly, probably interacts with PlsX.

It localises to the cell membrane. It catalyses the reaction an acyl phosphate + sn-glycerol 3-phosphate = a 1-acyl-sn-glycero-3-phosphate + phosphate. The protein operates within lipid metabolism; phospholipid metabolism. Functionally, catalyzes the transfer of an acyl group from acyl-phosphate (acyl-PO(4)) to glycerol-3-phosphate (G3P) to form lysophosphatidic acid (LPA). This enzyme utilizes acyl-phosphate as fatty acyl donor, but not acyl-CoA or acyl-ACP. This Malacoplasma penetrans (strain HF-2) (Mycoplasma penetrans) protein is Glycerol-3-phosphate acyltransferase.